A 35-amino-acid chain; its full sequence is Bacteriocin SRCAM 1580 (35 aa).

Belongs to the bacteriocin class IIA/YGNGV family.

The protein localises to the secreted. Functionally, bacteriocin with antibacterial activity against C.jejuni. The sequence is that of Bacteriocin SRCAM 1580 from Niallia circulans (Bacillus circulans).